A 285-amino-acid chain; its full sequence is Elongation factor Ts (285 aa).

The interval 82-85 is involved in Mg(2+) ion dislocation from EF-Tu; it reads TDFV.

It belongs to the EF-Ts family.

The protein resides in the cytoplasm. Associates with the EF-Tu.GDP complex and induces the exchange of GDP to GTP. It remains bound to the aminoacyl-tRNA.EF-Tu.GTP complex up to the GTP hydrolysis stage on the ribosome. The sequence is that of Elongation factor Ts from Yersinia pseudotuberculosis serotype O:1b (strain IP 31758).